We begin with the raw amino-acid sequence, 193 residues long: 3-isopropylmalate dehydratase small subunit (193 aa).

Belongs to the LeuD family. LeuD type 1 subfamily. Heterodimer of LeuC and LeuD.

The enzyme catalyses (2R,3S)-3-isopropylmalate = (2S)-2-isopropylmalate. Its pathway is amino-acid biosynthesis; L-leucine biosynthesis; L-leucine from 3-methyl-2-oxobutanoate: step 2/4. Its function is as follows. Catalyzes the isomerization between 2-isopropylmalate and 3-isopropylmalate, via the formation of 2-isopropylmaleate. This Bacillus cereus (strain AH820) protein is 3-isopropylmalate dehydratase small subunit.